Consider the following 167-residue polypeptide: 2-C-methyl-D-erythritol 2,4-cyclodiphosphate synthase (167 aa).

The a divalent metal cation site is built by Asp8 and His10. 4-CDP-2-C-methyl-D-erythritol 2-phosphate-binding positions include 8 to 10 (DIH) and 34 to 35 (HS). Position 42 (His42) interacts with a divalent metal cation. Residues 56–58 (DIG) and Arg142 each bind 4-CDP-2-C-methyl-D-erythritol 2-phosphate.

The protein belongs to the IspF family. As to quaternary structure, homotrimer. A divalent metal cation serves as cofactor.

The catalysed reaction is 4-CDP-2-C-methyl-D-erythritol 2-phosphate = 2-C-methyl-D-erythritol 2,4-cyclic diphosphate + CMP. It functions in the pathway isoprenoid biosynthesis; isopentenyl diphosphate biosynthesis via DXP pathway; isopentenyl diphosphate from 1-deoxy-D-xylulose 5-phosphate: step 4/6. In terms of biological role, involved in the biosynthesis of isopentenyl diphosphate (IPP) and dimethylallyl diphosphate (DMAPP), two major building blocks of isoprenoid compounds. Catalyzes the conversion of 4-diphosphocytidyl-2-C-methyl-D-erythritol 2-phosphate (CDP-ME2P) to 2-C-methyl-D-erythritol 2,4-cyclodiphosphate (ME-CPP) with a corresponding release of cytidine 5-monophosphate (CMP). The sequence is that of 2-C-methyl-D-erythritol 2,4-cyclodiphosphate synthase from Buchnera aphidicola subsp. Schizaphis graminum (strain Sg).